Here is a 181-residue protein sequence, read N- to C-terminus: uncharacterized protein (181 aa).

Residues 133 to 153 (MCVCVHVCACVYVCMCVLVCM) form a helical membrane-spanning segment.

The protein resides in the membrane. This is an uncharacterized protein from Homo sapiens (Human).